We begin with the raw amino-acid sequence, 286 residues long: Tryptophan 2,3-dioxygenase (286 aa).

Substrate contacts are provided by residues 55–59, Tyr117, and Arg121; that span reads FIIIH. His244 contributes to the heme binding site. Thr258 is a binding site for substrate.

It belongs to the tryptophan 2,3-dioxygenase family. Homotetramer. Heme serves as cofactor.

The enzyme catalyses L-tryptophan + O2 = N-formyl-L-kynurenine. It functions in the pathway amino-acid degradation; L-tryptophan degradation via kynurenine pathway; L-kynurenine from L-tryptophan: step 1/2. Functionally, heme-dependent dioxygenase that catalyzes the oxidative cleavage of the L-tryptophan (L-Trp) pyrrole ring and converts L-tryptophan to N-formyl-L-kynurenine. Catalyzes the oxidative cleavage of the indole moiety. The protein is Tryptophan 2,3-dioxygenase of Shewanella woodyi (strain ATCC 51908 / MS32).